The following is a 301-amino-acid chain: Pyridoxal 5'-phosphate synthase subunit PdxS (301 aa).

Asp31 is a D-ribose 5-phosphate binding site. Catalysis depends on Lys88, which acts as the Schiff-base intermediate with D-ribose 5-phosphate. D-ribose 5-phosphate is bound at residue Gly160. Position 172 (Lys172) interacts with D-glyceraldehyde 3-phosphate. Residues Gly221 and 242-243 (GS) contribute to the D-ribose 5-phosphate site.

It belongs to the PdxS/SNZ family. As to quaternary structure, in the presence of PdxT, forms a dodecamer of heterodimers.

It carries out the reaction aldehydo-D-ribose 5-phosphate + D-glyceraldehyde 3-phosphate + L-glutamine = pyridoxal 5'-phosphate + L-glutamate + phosphate + 3 H2O + H(+). Its pathway is cofactor biosynthesis; pyridoxal 5'-phosphate biosynthesis. Functionally, catalyzes the formation of pyridoxal 5'-phosphate from ribose 5-phosphate (RBP), glyceraldehyde 3-phosphate (G3P) and ammonia. The ammonia is provided by the PdxT subunit. Can also use ribulose 5-phosphate and dihydroxyacetone phosphate as substrates, resulting from enzyme-catalyzed isomerization of RBP and G3P, respectively. This chain is Pyridoxal 5'-phosphate synthase subunit PdxS, found in Methanosarcina mazei (strain ATCC BAA-159 / DSM 3647 / Goe1 / Go1 / JCM 11833 / OCM 88) (Methanosarcina frisia).